Consider the following 96-residue polypeptide: Translation initiation factor 1A 1 (96 aa).

In terms of domain architecture, S1-like spans 8–82 (GSHDLRMPDD…EKGDITWRYE (75 aa)).

It belongs to the eIF-1A family.

Functionally, seems to be required for maximal rate of protein biosynthesis. Enhances ribosome dissociation into subunits and stabilizes the binding of the initiator Met-tRNA(I) to 40 S ribosomal subunits. The chain is Translation initiation factor 1A 1 from Haloquadratum walsbyi (strain DSM 16790 / HBSQ001).